The chain runs to 854 residues: Fibronectin-binding protein PlpA (854 aa).

Residues M1–G24 show a composition bias toward low complexity. A disordered region spans residues M1–A33. The segment at Q91–N109 is fibronectin-binding. 4 disordered regions span residues Y247–P327, S411–N434, T743–P766, and I835–R854. The span at E258 to E267 shows a compositional bias: basic and acidic residues. Composition is skewed to polar residues over residues T311–I320 and S411–E428. Residues N384–V622 are a coiled coil. A compositionally biased stretch (pro residues) spans P746–L764.

It is found in the cell membrane. Its function is as follows. Binds immobilized fibronectin, specifically the gelatin/heparin-binding domain. In Mycoplasmoides gallisepticum (strain R(low / passage 15 / clone 2)) (Mycoplasma gallisepticum), this protein is Fibronectin-binding protein PlpA (plpA).